Here is a 124-residue protein sequence, read N- to C-terminus: Small ribosomal subunit protein uS13 (124 aa).

The disordered stretch occupies residues 91-124 (HRKGLPVNGQNTRNNARTRKGKPKAVTGKKQAGK).

The protein belongs to the universal ribosomal protein uS13 family. As to quaternary structure, part of the 30S ribosomal subunit. Forms a loose heterodimer with protein S19. Forms two bridges to the 50S subunit in the 70S ribosome.

Functionally, located at the top of the head of the 30S subunit, it contacts several helices of the 16S rRNA. In the 70S ribosome it contacts the 23S rRNA (bridge B1a) and protein L5 of the 50S subunit (bridge B1b), connecting the 2 subunits; these bridges are implicated in subunit movement. Contacts the tRNAs in the A and P-sites. The sequence is that of Small ribosomal subunit protein uS13 from Acholeplasma laidlawii (strain PG-8A).